Consider the following 449-residue polypeptide: C4-dicarboxylate transport protein 1 (449 aa).

9 helical membrane-spanning segments follow: residues 14-34 (SIFLQVVIGLVIGVICGVGIP), 47-67 (FIKLIKMLIALIVFCVVVNGI), 83-103 (SVIYFEILTTIALVLGLVVAY), 157-177 (ILQVLLFSVLFGSALNLVGEQ), 195-215 (IMGMIVRLAPLGVFGAVAFTT), 226-246 (LGALVLVFYATCLVFVMAVLG), 312-332 (FSIYLTLAVVFIAHVTGTPLA), 359-379 (VILAATLTAVPAIPVAGLVLV), and 385-405 (FMGIGRALTNLIGNCVATVTI).

It belongs to the dicarboxylate/amino acid:cation symporter (DAACS) (TC 2.A.23) family.

It localises to the cell inner membrane. In terms of biological role, responsible for the transport of dicarboxylates such as succinate, fumarate, and malate from the periplasm across the membrane. This is C4-dicarboxylate transport protein 1 from Pseudomonas aeruginosa (strain UCBPP-PA14).